A 258-amino-acid chain; its full sequence is MKIFHVPCLQDNYSYLIIDESTGDAAVVDPVDPEKVIASAEKHQAKIKFVLTTHHHWDHAGGNEKIKQLVPDIKVYGGSLDKVKGCTDAVDNGDKLTLGQDINILALHTPCHTKGHISYYVNGKEGENPAVFTGDTLFVAGCGKFFEGTAEQMYQSLCVTLAALPKPTQVYCGHEYTVKNLEFALTVEPNNGKIQQKLAWARQQRQADLPTIPSTLEEELETNPFMRVDKPEIQEKLGCKSPIDTMREVRNKKDQWRG.

2 residues coordinate Zn(2+): histidine 54 and histidine 56. Fe cation is bound by residues aspartate 58 and histidine 59. Residues histidine 112 and aspartate 135 each coordinate Zn(2+). Aspartate 135 contacts Fe cation. Substrate contacts are provided by residues 144 to 146 (KFF) and 174 to 176 (HEY). Fe cation is bound at residue histidine 174.

This sequence belongs to the metallo-beta-lactamase superfamily. Glyoxalase II family. Homodimer. Fe(2+) is required as a cofactor. It depends on Zn(2+) as a cofactor. The cofactor is Fe(3+). In terms of tissue distribution, mainly expressed in flowers and flower buds. Also detected in roots and leaves.

It is found in the cytoplasm. It carries out the reaction an S-(2-hydroxyacyl)glutathione + H2O = a 2-hydroxy carboxylate + glutathione + H(+). Its pathway is secondary metabolite metabolism; methylglyoxal degradation; (R)-lactate from methylglyoxal: step 2/2. Thiolesterase that catalyzes the hydrolysis of S-D-lactoyl-glutathione to form glutathione and D-lactic acid. This chain is Hydroxyacylglutathione hydrolase cytoplasmic (GLX2-2), found in Arabidopsis thaliana (Mouse-ear cress).